The chain runs to 306 residues: Agmatinase (306 aa).

Positions 126, 149, 151, 153, 230, and 232 each coordinate Mn(2+).

It belongs to the arginase family. Agmatinase subfamily. It depends on Mn(2+) as a cofactor.

It carries out the reaction agmatine + H2O = urea + putrescine. Its pathway is amine and polyamine biosynthesis; putrescine biosynthesis via agmatine pathway; putrescine from agmatine: step 1/1. In terms of biological role, catalyzes the formation of putrescine from agmatine. This Salmonella agona (strain SL483) protein is Agmatinase.